The chain runs to 527 residues: Bifunctional purine biosynthesis protein PurH (527 aa).

The MGS-like domain maps to methionine 1–valine 144.

The protein belongs to the PurH family.

It catalyses the reaction (6R)-10-formyltetrahydrofolate + 5-amino-1-(5-phospho-beta-D-ribosyl)imidazole-4-carboxamide = 5-formamido-1-(5-phospho-D-ribosyl)imidazole-4-carboxamide + (6S)-5,6,7,8-tetrahydrofolate. The catalysed reaction is IMP + H2O = 5-formamido-1-(5-phospho-D-ribosyl)imidazole-4-carboxamide. Its pathway is purine metabolism; IMP biosynthesis via de novo pathway; 5-formamido-1-(5-phospho-D-ribosyl)imidazole-4-carboxamide from 5-amino-1-(5-phospho-D-ribosyl)imidazole-4-carboxamide (10-formyl THF route): step 1/1. The protein operates within purine metabolism; IMP biosynthesis via de novo pathway; IMP from 5-formamido-1-(5-phospho-D-ribosyl)imidazole-4-carboxamide: step 1/1. This is Bifunctional purine biosynthesis protein PurH from Heliobacterium modesticaldum (strain ATCC 51547 / Ice1).